The following is a 256-amino-acid chain: Sugar fermentation stimulation protein homolog (256 aa).

Belongs to the SfsA family.

The polypeptide is Sugar fermentation stimulation protein homolog (Prochlorococcus marinus (strain MIT 9211)).